The primary structure comprises 628 residues: Nuclear receptor subfamily 4 group A member 3 (628 aa).

The interval 1–112 is activation function (AF)-1 domain; it reads MPCVQAQYSP…HHHHHHHHHH (112 aa). Positions 1-140 are required for DNA-PK heterotrimer; it reads MPCVQAQYSP…PSTSMYFKQS (140 aa). An interaction with NCOA1, NCOA2, NCOA3 and KAT2B region spans residues 1–293; that stretch reads MPCVQAQYSP…NRSSSSGEGT (293 aa). Disordered regions lie at residues 96–163 and 269–290; these read HGYH…DELP and ASSL…SSSG. The segment covering 97–113 has biased composition (basic residues); the sequence is GYHHHHHHHHHHHHHHQ. Residues 142–151 show a composition bias toward pro residues; sequence PSTPTTPGFP. The span at 270–289 shows a compositional bias: low complexity; it reads SSLLGESPSLPSPPNRSSSS. Positions 291–366 form a DNA-binding region, nuclear receptor; sequence EGTCAVCGDN…VGMVKEVVRT (76 aa). 2 NR C4-type zinc fingers span residues 294–314 and 330–354; these read CAVC…CEGC and CLAN…FQKC. A disordered region spans residues 366-396; that stretch reads TDSLKGRRGRLPSKPKSPLQQEPSQPSPPSP. Over residues 379 to 389 the composition is skewed to low complexity; sequence KPKSPLQQEPS. The segment at 381-628 is interaction with KAT2B; sequence KSPLQQEPSQ…DKLFLDTLPF (248 aa). The NR LBD domain maps to 396–625; it reads PPICMMNALV…SVIDKLFLDT (230 aa).

It belongs to the nuclear hormone receptor family. NR4 subfamily. In terms of assembly, interacts with SIX3 (via homeobox); differentially regulates the transcriptional activities of NR4A3. Interacts with NR3C1 (via nuclear receptor DNA-binding domain); the interactions represses transcription activity of NR4A3 on the POMC promoter Nur response element (NurRE). Interacts with TRIM28; the interactions potentiates NR4A3 activity on NurRE promoter. Binds DNA as a monomer and homodimer. Interacts with PARP1; activates PARP1 by improving acetylation of PARP1 and suppressing the interaction between PARP1 and SIRT1. Interacts with the constituents of DNA-PK heterotrimer PRKDC, XRCC6 and XRCC5; phosphorylates and prevents NR4A3 ubiquitinylation and degradation. Interacts with NCOA2; potentiates the activity of the NR4A3. Interacts with NCOA1, NCOA3, MED1 and KAT2B. Interacts with EP300 and NCOA2; mediates the recruitment of MED1 in the coactivator complex. In terms of processing, phosphorylated by PRKDC. In terms of tissue distribution, expressed at high levels in cultured apoptotic neuronal cells and fetal brain, and at low level in adult brain.

The protein resides in the nucleus. Its function is as follows. Transcriptional activator that binds to regulatory elements in promoter regions in a cell- and response element (target)-specific manner. Induces gene expression by binding as monomers to the NR4A1 response element (NBRE) 5'-AAAAGGTCA-3' site and as homodimers to the Nur response element (NurRE) site in the promoter of their regulated target genes. Plays a role in the regulation of proliferation, survival and differentiation of many different cell types and also in metabolism and inflammation. Mediates proliferation of vascular smooth muscle, myeloid progenitor cell and type B pancreatic cells; promotes mitogen-induced vascular smooth muscle cell proliferation through transactivation of SKP2 promoter by binding a NBRE site. Upon PDGF stimulation, stimulates vascular smooth muscle cell proliferation by regulating CCND1 and CCND2 expression. In islets, induces type B pancreatic cell proliferation through up-regulation of genes that activate cell cycle, as well as genes that cause degradation of the CDKN1A. Negatively regulates myeloid progenitor cell proliferation by repressing RUNX1 in a NBRE site-independent manner. During inner ear, plays a role as a key mediator of the proliferative growth phase of semicircular canal development. Also mediates survival of neuron and smooth muscle cells; mediates CREB-induced neuronal survival, and during hippocampus development, plays a critical role in pyramidal cell survival and axonal guidance. Is required for S phase entry of the cell cycle and survival of smooth muscle cells by inducing CCND1, resulting in RB1 phosphorylation. Binds to NBRE motif in CCND1 promoter, resulting in the activation of the promoter and CCND1 transcription. Also plays a role in inflammation; Upon TNF stimulation, mediates monocyte adhesion by inducing the expression of VCAM1 and ICAM1 by binding to the NBRE consensus site. In mast cells activated by Fc-epsilon receptor cross-linking, promotes the synthesis and release of cytokines but impairs events leading to degranulation. Also plays a role in metabolism; by modulating feeding behavior; and by playing a role in energy balance by inhibiting the glucocorticoid-induced orexigenic neuropeptides AGRP expression, at least in part by forming a complex with activated NR3C1 on the AGRP-glucocorticoid response element (GRE), and thus weakening the DNA binding activity of NR3C1. Upon catecholamines stimulation, regulates gene expression that controls oxidative metabolism in skeletal muscle. Plays a role in glucose transport by regulating translocation of the SLC2A4 glucose transporter to the cell surface. Finally, during gastrulation plays a crucial role in the formation of anterior mesoderm by controlling cell migration. Also participates in cardiac hypertrophy by activating PARP1. The protein is Nuclear receptor subfamily 4 group A member 3 (Nr4a3) of Rattus norvegicus (Rat).